We begin with the raw amino-acid sequence, 321 residues long: Protein ZAR1-like (321 aa).

Residues 110–214 (RTLSSCSPWD…GDAASEPLRR (105 aa)) are disordered. Residues 145–154 (LRRDGDEAES) show a composition bias toward basic and acidic residues. A 3CxxC-type zinc finger spans residues 222 to 307 (PKYGYFHCKD…QELCGRCKDK (86 aa)).

This sequence belongs to the ZAR1 family. Interacts with YBX2.

The protein resides in the cytoplasm. Its subcellular location is the cytoplasmic ribonucleoprotein granule. In terms of biological role, mRNA-binding protein required for maternal mRNA storage, translation and degradation during oocyte maturation. Probably promotes formation of some phase-separated membraneless compartment that stores maternal mRNAs in oocytes: acts by undergoing liquid-liquid phase separation upon binding to maternal mRNAs. Binds to the 3'-UTR of maternal mRNAs, inhibiting their translation. This chain is Protein ZAR1-like, found in Homo sapiens (Human).